A 202-amino-acid chain; its full sequence is Sterile alpha motif domain-containing protein 10 (202 aa).

Residues 1–22 (MFTELRSKLSPPRARAGAVRPG) form a disordered region. The SAM domain maps to 118–184 (WSQQDVCKWL…LQQVLHLQVR (67 aa)).

This Mus musculus (Mouse) protein is Sterile alpha motif domain-containing protein 10.